Consider the following 252-residue polypeptide: Imidazole glycerol phosphate synthase subunit HisF (252 aa).

Catalysis depends on residues Asp-11 and Asp-130.

The protein belongs to the HisA/HisF family. In terms of assembly, heterodimer of HisH and HisF.

The protein resides in the cytoplasm. It carries out the reaction 5-[(5-phospho-1-deoxy-D-ribulos-1-ylimino)methylamino]-1-(5-phospho-beta-D-ribosyl)imidazole-4-carboxamide + L-glutamine = D-erythro-1-(imidazol-4-yl)glycerol 3-phosphate + 5-amino-1-(5-phospho-beta-D-ribosyl)imidazole-4-carboxamide + L-glutamate + H(+). It functions in the pathway amino-acid biosynthesis; L-histidine biosynthesis; L-histidine from 5-phospho-alpha-D-ribose 1-diphosphate: step 5/9. In terms of biological role, IGPS catalyzes the conversion of PRFAR and glutamine to IGP, AICAR and glutamate. The HisF subunit catalyzes the cyclization activity that produces IGP and AICAR from PRFAR using the ammonia provided by the HisH subunit. This is Imidazole glycerol phosphate synthase subunit HisF from Geobacillus thermodenitrificans (strain NG80-2).